The following is a 33-amino-acid chain: Photosystem II reaction center protein Psb30 (33 aa).

A helical membrane pass occupies residues 5 to 25 (LIVQLGSLALITVAGPAIIVL).

The protein belongs to the Psb30/Ycf12 family. As to quaternary structure, PSII is composed of 1 copy each of membrane proteins PsbA, PsbB, PsbC, PsbD, PsbE, PsbF, PsbH, PsbI, PsbJ, PsbK, PsbL, PsbM, PsbT, PsbY, PsbZ, Psb30/Ycf12, peripheral proteins of the oxygen-evolving complex and a large number of cofactors. It forms dimeric complexes.

The protein localises to the plastid. The protein resides in the chloroplast thylakoid membrane. Functionally, a core subunit of photosystem II (PSII), probably helps stabilize the reaction center. This Euglena stellata protein is Photosystem II reaction center protein Psb30.